A 261-amino-acid polypeptide reads, in one-letter code: Imidazole glycerol phosphate synthase subunit HisF (261 aa).

Active-site residues include aspartate 11 and aspartate 130.

The protein belongs to the HisA/HisF family. As to quaternary structure, heterodimer of HisH and HisF.

It localises to the cytoplasm. The enzyme catalyses 5-[(5-phospho-1-deoxy-D-ribulos-1-ylimino)methylamino]-1-(5-phospho-beta-D-ribosyl)imidazole-4-carboxamide + L-glutamine = D-erythro-1-(imidazol-4-yl)glycerol 3-phosphate + 5-amino-1-(5-phospho-beta-D-ribosyl)imidazole-4-carboxamide + L-glutamate + H(+). It participates in amino-acid biosynthesis; L-histidine biosynthesis; L-histidine from 5-phospho-alpha-D-ribose 1-diphosphate: step 5/9. Its function is as follows. IGPS catalyzes the conversion of PRFAR and glutamine to IGP, AICAR and glutamate. The HisF subunit catalyzes the cyclization activity that produces IGP and AICAR from PRFAR using the ammonia provided by the HisH subunit. The sequence is that of Imidazole glycerol phosphate synthase subunit HisF from Heliobacterium modesticaldum (strain ATCC 51547 / Ice1).